A 409-amino-acid chain; its full sequence is Arginine deiminase (409 aa).

Cys-399 serves as the catalytic Amidino-cysteine intermediate.

The protein belongs to the arginine deiminase family.

It is found in the cytoplasm. The catalysed reaction is L-arginine + H2O = L-citrulline + NH4(+). Its pathway is amino-acid degradation; L-arginine degradation via ADI pathway; carbamoyl phosphate from L-arginine: step 1/2. This chain is Arginine deiminase, found in Streptococcus pneumoniae (strain JJA).